A 206-amino-acid polypeptide reads, in one-letter code: Ribonuclease HII (206 aa).

Residues 1 to 206 (MKVLGIDEAG…SWATVQKKKQ (206 aa)) form the RNase H type-2 domain. Residues aspartate 7, glutamate 8, and aspartate 105 each coordinate a divalent metal cation.

It belongs to the RNase HII family. The cofactor is Mn(2+). It depends on Mg(2+) as a cofactor.

The protein localises to the cytoplasm. The enzyme catalyses Endonucleolytic cleavage to 5'-phosphomonoester.. Its function is as follows. Endonuclease that specifically degrades the RNA of RNA-DNA hybrids. The polypeptide is Ribonuclease HII (rnhB) (Methanothermobacter thermautotrophicus (strain ATCC 29096 / DSM 1053 / JCM 10044 / NBRC 100330 / Delta H) (Methanobacterium thermoautotrophicum)).